We begin with the raw amino-acid sequence, 374 residues long: Dual-specificity RNA methyltransferase RlmN (374 aa).

The active-site Proton acceptor is the glutamate 91. The Radical SAM core domain occupies 97-340; sequence EDDRGTLCIS…TTVRKTRGDD (244 aa). A disulfide bridge connects residues cysteine 104 and cysteine 345. Cysteine 111, cysteine 115, and cysteine 118 together coordinate [4Fe-4S] cluster. S-adenosyl-L-methionine-binding positions include 165 to 166, serine 197, 219 to 221, and asparagine 302; these read GE and SLH. Cysteine 345 functions as the S-methylcysteine intermediate in the catalytic mechanism.

This sequence belongs to the radical SAM superfamily. RlmN family. It depends on [4Fe-4S] cluster as a cofactor.

The protein localises to the cytoplasm. It carries out the reaction adenosine(2503) in 23S rRNA + 2 reduced [2Fe-2S]-[ferredoxin] + 2 S-adenosyl-L-methionine = 2-methyladenosine(2503) in 23S rRNA + 5'-deoxyadenosine + L-methionine + 2 oxidized [2Fe-2S]-[ferredoxin] + S-adenosyl-L-homocysteine. The catalysed reaction is adenosine(37) in tRNA + 2 reduced [2Fe-2S]-[ferredoxin] + 2 S-adenosyl-L-methionine = 2-methyladenosine(37) in tRNA + 5'-deoxyadenosine + L-methionine + 2 oxidized [2Fe-2S]-[ferredoxin] + S-adenosyl-L-homocysteine. In terms of biological role, specifically methylates position 2 of adenine 2503 in 23S rRNA and position 2 of adenine 37 in tRNAs. m2A2503 modification seems to play a crucial role in the proofreading step occurring at the peptidyl transferase center and thus would serve to optimize ribosomal fidelity. This chain is Dual-specificity RNA methyltransferase RlmN, found in Acidovorax sp. (strain JS42).